The primary structure comprises 125 residues: PCNA-associated factor (125 aa).

The disordered stretch occupies residues Met-1 to Glu-125. The span at Ser-8 to Ser-17 shows a compositional bias: low complexity. Positions Arg-28–Asn-39 match the D-box motif. A PIP-box motif is present at residues Gln-68–Ser-79. The KEN box signature appears at Lys-85 to Asn-87. Positions Glu-95–Lys-107 match the Initiation motif motif. The segment covering Pro-115–Glu-125 has biased composition (acidic residues).

As to quaternary structure, interacts with pcna.

It localises to the nucleus. The protein resides in the cytoplasm. It is found in the perinuclear region. In terms of biological role, PCNA-binding protein that acts as a regulator of DNA repair during DNA replication. Following DNA damage, the interaction with pcna is disrupted, facilitating the interaction between monoubiquitinated pcna and the translesion DNA synthesis DNA polymerase eta (polh) at stalled replisomes, facilitating the bypass of replication-fork-blocking lesions. Also acts as a regulator of centrosome number. The chain is PCNA-associated factor from Xenopus tropicalis (Western clawed frog).